Consider the following 394-residue polypeptide: Putative pectate lyase 17 (394 aa).

The first 22 residues, 1 to 22 (MTHFTVSCLLVALFLCQSLVHA), serve as a signal peptide directing secretion. The Ca(2+) site is built by Asp-192, Asp-216, and Asp-220. The active site involves Arg-272.

This sequence belongs to the polysaccharide lyase 1 family. Ca(2+) serves as cofactor.

The enzyme catalyses Eliminative cleavage of (1-&gt;4)-alpha-D-galacturonan to give oligosaccharides with 4-deoxy-alpha-D-galact-4-enuronosyl groups at their non-reducing ends.. The protein operates within glycan metabolism; pectin degradation; 2-dehydro-3-deoxy-D-gluconate from pectin: step 2/5. This Arabidopsis thaliana (Mouse-ear cress) protein is Putative pectate lyase 17.